A 338-amino-acid chain; its full sequence is 4-hydroxythreonine-4-phosphate dehydrogenase (338 aa).

Residues His-140 and Thr-141 each coordinate substrate. Residues His-172, His-217, and His-271 each contribute to the a divalent metal cation site. Positions 279, 288, and 297 each coordinate substrate.

This sequence belongs to the PdxA family. Homodimer. A divalent metal cation serves as cofactor.

It is found in the cytoplasm. It carries out the reaction 4-(phosphooxy)-L-threonine + NAD(+) = 3-amino-2-oxopropyl phosphate + CO2 + NADH. It participates in cofactor biosynthesis; pyridoxine 5'-phosphate biosynthesis; pyridoxine 5'-phosphate from D-erythrose 4-phosphate: step 4/5. In terms of biological role, catalyzes the NAD(P)-dependent oxidation of 4-(phosphooxy)-L-threonine (HTP) into 2-amino-3-oxo-4-(phosphooxy)butyric acid which spontaneously decarboxylates to form 3-amino-2-oxopropyl phosphate (AHAP). This chain is 4-hydroxythreonine-4-phosphate dehydrogenase, found in Prosthecochloris aestuarii (strain DSM 271 / SK 413).